Reading from the N-terminus, the 120-residue chain is UPF0102 protein CbuK_0265 (120 aa).

This sequence belongs to the UPF0102 family.

In Coxiella burnetii (strain CbuK_Q154) (Coxiella burnetii (strain Q154)), this protein is UPF0102 protein CbuK_0265.